Reading from the N-terminus, the 309-residue chain is MKQKILVLGGPTAVGKTELSIKLAEKLNGEILSADSMQIYKKMDIGSAKVTKEEMRDINHHMIDIVSPEEEFSVADFKNIGEKAIKEIIAKEKLPMIVGGTGLYINSLTCNVTFTESEKDDEYRTYLESLAEANGNNYVHEMLREIDEISYRDIHPNNRKRVIRALEVYKISGKPFSSYNAGNDFYKTDYHVFYYVLTMDREKLYDRINKRVDIMIENGLIDECIELKKLGYTSSMQSMQGIGYKEILYYLDKKISLYEAVNLIKQGSRNYAKRQLTWFRRDPRCTFLDKDVLSDKEILSKIVDDITNN.

10 to 17 contributes to the ATP binding site; sequence GPTAVGKT. A substrate-binding site is contributed by 12-17; it reads TAVGKT. Residues 35 to 38 are interaction with substrate tRNA; it reads DSMQ.

Belongs to the IPP transferase family. As to quaternary structure, monomer. It depends on Mg(2+) as a cofactor.

It catalyses the reaction adenosine(37) in tRNA + dimethylallyl diphosphate = N(6)-dimethylallyladenosine(37) in tRNA + diphosphate. Functionally, catalyzes the transfer of a dimethylallyl group onto the adenine at position 37 in tRNAs that read codons beginning with uridine, leading to the formation of N6-(dimethylallyl)adenosine (i(6)A). This Clostridium botulinum (strain Eklund 17B / Type B) protein is tRNA dimethylallyltransferase.